Reading from the N-terminus, the 209-residue chain is MPIHNKVLSNDHFRKHWQMRVRTWFNQPARKIRRRNNRIEKAAKVFPRPIATLKPVVRGSTIRYNMKVRAGRGFTLEELKAAGLTAQYARTIGIAVDTRRVNKTQQSLTLNTQRLKNYQSKLVLFPRKVNAPKKGEATKEEVAKAVQTLKPFTVKSAIAVTCEQTPRKPTEAEKKFSAYATLKAADSKAKTVGIRRKAAEIKAAKAAEK.

Belongs to the eukaryotic ribosomal protein eL13 family. Component of the 60S large ribosomal subunit (LSU).

The protein localises to the cytoplasm. Component of the ribosome, a large ribonucleoprotein complex responsible for the synthesis of proteins in the cell. The small ribosomal subunit (SSU) binds messenger RNAs (mRNAs) and translates the encoded message by selecting cognate aminoacyl-transfer RNA (tRNA) molecules. The large subunit (LSU) contains the ribosomal catalytic site termed the peptidyl transferase center (PTC), which catalyzes the formation of peptide bonds, thereby polymerizing the amino acids delivered by tRNAs into a polypeptide chain. The nascent polypeptides leave the ribosome through a tunnel in the LSU and interact with protein factors that function in enzymatic processing, targeting, and the membrane insertion of nascent chains at the exit of the ribosomal tunnel. As part of the LSU, it is probably required for its formation and the maturation of rRNAs. In Dictyostelium discoideum (Social amoeba), this protein is Large ribosomal subunit protein eL13 (rpl13).